The chain runs to 122 residues: Large ribosomal subunit protein bL19c (122 aa).

It belongs to the bacterial ribosomal protein bL19 family.

It localises to the plastid. It is found in the chloroplast. The chain is Large ribosomal subunit protein bL19c from Gracilaria tenuistipitata var. liui (Red alga).